We begin with the raw amino-acid sequence, 360 residues long: Fe(3+) ions import ATP-binding protein FbpC (360 aa).

Positions 4–236 (LEIKGLHKHY…PKDRMIAEFL (233 aa)) constitute an ABC transporter domain. ATP is bound at residue 36–43 (GPSGCGKT).

It belongs to the ABC transporter superfamily. Fe(3+) ion importer (TC 3.A.1.10) family. The complex is composed of two ATP-binding proteins (FbpC), two transmembrane proteins (FbpB) and a solute-binding protein (FbpA).

It is found in the cell inner membrane. It catalyses the reaction Fe(3+)(out) + ATP + H2O = Fe(3+)(in) + ADP + phosphate + H(+). In terms of biological role, part of the ABC transporter complex FbpABC involved in Fe(3+) ions import. Responsible for energy coupling to the transport system. The protein is Fe(3+) ions import ATP-binding protein FbpC of Mesorhizobium japonicum (strain LMG 29417 / CECT 9101 / MAFF 303099) (Mesorhizobium loti (strain MAFF 303099)).